A 465-amino-acid chain; its full sequence is 28S rRNA (cytosine-C(5))-methyltransferase (465 aa).

The residue at position 2 (glycine 2) is an N-acetylglycine. Phosphoserine is present on serine 167. S-adenosyl-L-methionine is bound by residues 234-240, aspartate 258, arginine 263, and aspartate 305; that span reads CAAPGNK. Cysteine 359 serves as the catalytic Nucleophile. Positions 430 to 465 are disordered; the sequence is TPAPQTDAMDPEPLSQVPKRKRRRKAAVGASMQPST.

Belongs to the class I-like SAM-binding methyltransferase superfamily. RsmB/NOP family. As to expression, in the hippocampus, specifically expressed in adult hippocampal NG2-positive oligodendrocyte precursor cells (at protein level).

Its subcellular location is the nucleus. The protein localises to the nucleolus. It carries out the reaction a cytidine in 28S rRNA + S-adenosyl-L-methionine = a 5-methylcytidine in 28S rRNA + S-adenosyl-L-homocysteine + H(+). Its function is as follows. S-adenosyl-L-methionine-dependent methyltransferase that specifically methylates the C(5) position of cytosine 3438 (m5C3438) in 28S rRNA. m5C3782 promotes protein translation without affecting ribosome biogenesis and fidelity. Required for corpus callosum and cerebral cortex development. This chain is 28S rRNA (cytosine-C(5))-methyltransferase, found in Mus musculus (Mouse).